The chain runs to 249 residues: Segregation and condensation protein A (249 aa).

It belongs to the ScpA family. In terms of assembly, component of a cohesin-like complex composed of ScpA, ScpB and the Smc homodimer, in which ScpA and ScpB bind to the head domain of Smc. The presence of the three proteins is required for the association of the complex with DNA.

Its subcellular location is the cytoplasm. Participates in chromosomal partition during cell division. May act via the formation of a condensin-like complex containing Smc and ScpB that pull DNA away from mid-cell into both cell halves. The protein is Segregation and condensation protein A of Listeria monocytogenes serotype 4a (strain HCC23).